The following is a 553-amino-acid chain: uncharacterized protein (553 aa).

Residues 26–109 (RFEFVGWGSR…YDLLEKHYKE (84 aa)) form the SWIB/MDM2 domain. Residues 150-275 (AIVSDNIKLL…KAKKLHKDQT (126 aa)) form the Plus3 domain. 2 disordered regions span residues 335-357 (QNPEVSSPEAHKSDNEQRLSESP) and 447-482 (PVNNVDNGSQVQPNPSEVIELSDDDEDDNGDGETLD). Residues 343–353 (EAHKSDNEQRL) are compositionally biased toward basic and acidic residues. Polar residues predominate over residues 447-461 (PVNNVDNGSQVQPNP). The segment covering 466 to 480 (ELSDDDEDDNGDGET) has biased composition (acidic residues). The GYF domain maps to 497–551 (KLNWLYKDPQGLVQGPFSLTQLKAWSDAEYFTKQFRVWMTGESMESAVLLTDVLR).

This is an uncharacterized protein from Arabidopsis thaliana (Mouse-ear cress).